We begin with the raw amino-acid sequence, 457 residues long: UDP-N-acetylmuramoyl-tripeptide--D-alanyl-D-alanine ligase (457 aa).

113–119 (GSNGKTT) provides a ligand contact to ATP.

It belongs to the MurCDEF family. MurF subfamily.

It is found in the cytoplasm. It catalyses the reaction D-alanyl-D-alanine + UDP-N-acetyl-alpha-D-muramoyl-L-alanyl-gamma-D-glutamyl-meso-2,6-diaminopimelate + ATP = UDP-N-acetyl-alpha-D-muramoyl-L-alanyl-gamma-D-glutamyl-meso-2,6-diaminopimeloyl-D-alanyl-D-alanine + ADP + phosphate + H(+). Its pathway is cell wall biogenesis; peptidoglycan biosynthesis. Functionally, involved in cell wall formation. Catalyzes the final step in the synthesis of UDP-N-acetylmuramoyl-pentapeptide, the precursor of murein. The polypeptide is UDP-N-acetylmuramoyl-tripeptide--D-alanyl-D-alanine ligase (Bacillus subtilis (strain 168)).